The primary structure comprises 364 residues: tRNA-specific 2-thiouridylase MnmA (364 aa).

ATP-binding positions include 6–13 and Leu32; that span reads AMSGGVDS. Cys101 serves as the catalytic Nucleophile. A disulfide bond links Cys101 and Cys193. An ATP-binding site is contributed by Gly125. Residues 143-145 are interaction with tRNA; the sequence is KDQ. Cys193 acts as the Cysteine persulfide intermediate in catalysis.

The protein belongs to the MnmA/TRMU family.

It localises to the cytoplasm. It catalyses the reaction S-sulfanyl-L-cysteinyl-[protein] + uridine(34) in tRNA + AH2 + ATP = 2-thiouridine(34) in tRNA + L-cysteinyl-[protein] + A + AMP + diphosphate + H(+). Its function is as follows. Catalyzes the 2-thiolation of uridine at the wobble position (U34) of tRNA, leading to the formation of s(2)U34. In Rhodococcus opacus (strain B4), this protein is tRNA-specific 2-thiouridylase MnmA.